The following is a 120-amino-acid chain: Large ribosomal subunit protein bL36m (120 aa).

It belongs to the bacterial ribosomal protein bL36 family. In terms of assembly, component of the mitochondrial ribosome large subunit (39S) which comprises a 16S rRNA and about 50 distinct proteins.

It is found in the mitochondrion. The sequence is that of Large ribosomal subunit protein bL36m (mrpl36) from Osmerus mordax (Rainbow smelt).